A 321-amino-acid polypeptide reads, in one-letter code: Chemotaxis protein CheV1 (321 aa).

The CheW-like domain maps to 19–177 (ELQLLCFRLG…IEKMLIDVFP (159 aa)). The region spanning 198–319 (CVLLADDSPS…IQRVVKQFLE (122 aa)) is the Response regulatory domain. 4-aspartylphosphate is present on Asp252.

Its function is as follows. Plays an essential role in chemotaxis signal transduction system in order to colonize the host stomach. May act as a phosphate sink to control the flow of phosphate to CheAY. The protein is Chemotaxis protein CheV1 of Helicobacter pylori (strain ATCC 700392 / 26695) (Campylobacter pylori).